The following is an 85-amino-acid chain: Toxin BmKaTX15 (85 aa).

Positions 1-19 (MNYLVFFSLALLVMTGVES) are cleaved as a signal peptide. The region spanning 21 to 83 (RDGYIADDKN…VPIRVPGKCN (63 aa)) is the LCN-type CS-alpha/beta domain. 4 disulfide bridges follow: C31/C82, C35/C55, C41/C65, and C45/C67.

This sequence belongs to the long (4 C-C) scorpion toxin superfamily. Sodium channel inhibitor family. Alpha subfamily. In terms of tissue distribution, expressed by the venom gland.

It localises to the secreted. Alpha toxins bind voltage-independently at site-3 of sodium channels (Nav) and inhibit the inactivation of the activated channels, thereby blocking neuronal transmission. The chain is Toxin BmKaTX15 from Olivierus martensii (Manchurian scorpion).